The primary structure comprises 1325 residues: NHS-like protein 3 (1325 aa).

Residues 53–85 (LEDLHTEAQEGLKILQQEEEDTSSKERNESLEN) adopt a coiled-coil conformation. Disordered regions lie at residues 68–92 (QQEE…SGHS), 111–131 (QGST…KRRS), 291–348 (CSAS…KGKC), 368–570 (MSVS…AKTS), 595–614 (QTNT…TTVK), 829–891 (EVNG…MEES), 935–981 (LLST…VSEF), 1084–1138 (VGED…SSAV), 1243–1272 (GTKK…ENAT), and 1293–1313 (SDQV…EQAS). Residues 296 to 334 (ASKGSMASASPSSSRSGSGTNQAPPTTSPSRSNSQSSET) show a composition bias toward low complexity. A compositionally biased stretch (polar residues) spans 335–344 (IVSNSSTISS). Residues 369-378 (SVSSSSSWKS) show a composition bias toward low complexity. Over residues 400 to 412 (VRNSHSFSRSLSV) the composition is skewed to polar residues. The segment covering 428-447 (LHHENMQRQREQGDIQDPKD) has biased composition (basic and acidic residues). Polar residues predominate over residues 450–460 (PNNNEQTNRDI). The segment covering 515-524 (KTRECGENFD) has biased composition (basic and acidic residues). Low complexity predominate over residues 528 to 541 (SPSSGYSSQSGTPT). Positions 834–850 (SPPPSPPPEHHPPPPPI) are enriched in pro residues. Polar residues-rich tracts occupy residues 935-948 (LLST…SSPE) and 1088-1100 (QVNN…TEPT). Low complexity predominate over residues 1124–1138 (KSNSPAKSSSASSAV). Residues 1302–1311 (RAQSLGNQEQ) show a composition bias toward polar residues.

Functionally, able to directly activate the TNF-NFkappaB signaling pathway. This chain is NHS-like protein 3 (nhsl3), found in Danio rerio (Zebrafish).